A 62-amino-acid polypeptide reads, in one-letter code: Large ribosomal subunit protein uL30 (62 aa).

It belongs to the universal ribosomal protein uL30 family. In terms of assembly, part of the 50S ribosomal subunit.

The protein is Large ribosomal subunit protein uL30 of Beutenbergia cavernae (strain ATCC BAA-8 / DSM 12333 / CCUG 43141 / JCM 11478 / NBRC 16432 / NCIMB 13614 / HKI 0122).